The following is a 569-amino-acid chain: Pyrophosphate--fructose 6-phosphate 1-phosphotransferase subunit beta (569 aa).

Glycine 107 serves as a coordination point for diphosphate. Aspartate 201 serves as a coordination point for Mg(2+). Substrate is bound by residues 229–231, 268–269, 276–278, glutamate 337, and 442–445; these read TID, KY, MGR, and YEGR. Aspartate 231 serves as the catalytic Proton acceptor.

Belongs to the phosphofructokinase type A (PFKA) family. PPi-dependent PFK group II subfamily. Clade 'Long' sub-subfamily. As to quaternary structure, tetramer of two alpha (regulatory) and two beta (catalytic) chains. Requires Mg(2+) as cofactor.

Its subcellular location is the cytoplasm. It catalyses the reaction beta-D-fructose 6-phosphate + diphosphate = beta-D-fructose 1,6-bisphosphate + phosphate + H(+). The protein operates within carbohydrate degradation; glycolysis; D-glyceraldehyde 3-phosphate and glycerone phosphate from D-glucose: step 3/4. Allosterically activated by fructose 2,6-bisphosphate. Its function is as follows. Catalytic subunit of pyrophosphate--fructose 6-phosphate 1-phosphotransferase. Catalyzes the phosphorylation of D-fructose 6-phosphate, the first committing step of glycolysis. Uses inorganic phosphate (PPi) as phosphoryl donor instead of ATP like common ATP-dependent phosphofructokinases (ATP-PFKs), which renders the reaction reversible, and can thus function both in glycolysis and gluconeogenesis. In Solanum tuberosum (Potato), this protein is Pyrophosphate--fructose 6-phosphate 1-phosphotransferase subunit beta.